Consider the following 109-residue polypeptide: MFKNIIIVVAVTLCALFTNEHVVYSANLEHGEQIFSANCAACHAGGNNVIMPEKTLKAEALEANNIKNISAIANQVKNGKNAMPSFSRLSDSDIEDVANYVLSKADKGW.

Residues 1–25 (MFKNIIIVVAVTLCALFTNEHVVYS) form the signal peptide. Heme c-binding residues include Cys39, Cys42, His43, and Met83.

This sequence belongs to the cytochrome c family. PetJ subfamily. Monomer. Post-translationally, binds 1 heme c group covalently per subunit.

Its subcellular location is the plastid. The protein resides in the chloroplast thylakoid lumen. Functions as an electron carrier between membrane-bound cytochrome b6-f and photosystem I in oxygenic photosynthesis. The polypeptide is Cytochrome c6 (petJ) (Cyanidium caldarium (Red alga)).